The chain runs to 35 residues: Phospholipase A2 neuwieditoxin-1 (35 aa).

Ca(2+)-binding residues include Tyr-27, Gly-29, and Gly-31.

It belongs to the phospholipase A2 family. Group II subfamily. D49 sub-subfamily. As to quaternary structure, dimer. Ca(2+) serves as cofactor. As to expression, expressed by the venom gland.

The protein resides in the secreted. The catalysed reaction is a 1,2-diacyl-sn-glycero-3-phosphocholine + H2O = a 1-acyl-sn-glycero-3-phosphocholine + a fatty acid + H(+). Functionally, snake venom phospholipase A2 (PLA2) that shows presynaptic neurotoxicity. 10 ug/ml of this protein produce complete neuromuscular blockade up to 80 minutes, without inhibiting the responses to acetylcholine (ACh) and potassium chloride (KCl). In addition, it produces a calcium-dependent blockade of acetylcholine release and causes appearance of giant miniature end-plate potentials. PLA2 catalyzes the calcium-dependent hydrolysis of the 2-acyl groups in 3-sn-phosphoglycerides. The chain is Phospholipase A2 neuwieditoxin-1 from Bothrops pauloensis (Neuwied's lancehead).